A 119-amino-acid polypeptide reads, in one-letter code: Small ribosomal subunit protein uS13 (119 aa).

Residues 96–119 form a disordered region; the sequence is PVRGQRTKTNARTRKGPRKLIKSR.

It belongs to the universal ribosomal protein uS13 family. In terms of assembly, part of the 30S ribosomal subunit. Forms a loose heterodimer with protein S19. Forms two bridges to the 50S subunit in the 70S ribosome.

In terms of biological role, located at the top of the head of the 30S subunit, it contacts several helices of the 16S rRNA. In the 70S ribosome it contacts the 23S rRNA (bridge B1a) and protein L5 of the 50S subunit (bridge B1b), connecting the 2 subunits; these bridges are implicated in subunit movement. Contacts the tRNAs in the A and P-sites. This chain is Small ribosomal subunit protein uS13, found in Buchnera aphidicola subsp. Cinara cedri (strain Cc).